Consider the following 85-residue polypeptide: Alpha-toxin Amm8 (85 aa).

A signal peptide spans 1–19 (MNYLVMISLALLFMTGVES). The 63-residue stretch at 21-83 (KDGYIVNDIN…VRTKGPGRCN (63 aa)) folds into the LCN-type CS-alpha/beta domain. 4 cysteine pairs are disulfide-bonded: Cys-31–Cys-82, Cys-35–Cys-55, Cys-41–Cys-65, and Cys-45–Cys-67. Position 85 (Arg-85) is a propeptide, removed by a carboxypeptidase.

Belongs to the long (4 C-C) scorpion toxin superfamily. Sodium channel inhibitor family. Alpha subfamily. Expressed by the venom gland.

It is found in the secreted. Its function is as follows. Alpha toxins bind voltage-independently at site-3 of sodium channels (Nav) and inhibit the inactivation of the activated channels, thereby blocking neuronal transmission. The toxin principally slows the inactivation process of TTX-sensitive sodium channels. It discriminates neuronal versus muscular sodium channel, as it is more potent on rat brain Nav1.2/SCN2A (EC(50)=29 nM) than on rat skeletal muscle Nav1.4/SCN4A (EC(50)=416 nM). It also shows a weak activity on Nav1.7/SCN9A (EC(50)=1.76 uM). In vivo, the toxin produces pain hypersensibility to mechanical and thermal stimuli. It also exhibits potent analgesic activity (when injected intraperitoneally), increasing hot plate and tail flick withdrawal latencies in a dose-dependent fashion. This paradoxical analgesic action, is significantly suppressed by opioid receptor antagonists, suggesting a pain-induced analgesia mechanism that involves an endogenous opioid system. This led to hypothesis that pain relief induced by peripheral administration of Amm VIII may result from sensitization of primary afferent neurons and subsequent activation of an opioid-dependent noxious inhibitory control. In Androctonus mauritanicus mauritanicus (Scorpion), this protein is Alpha-toxin Amm8.